The primary structure comprises 529 residues: Protein PAT1 homolog 2 (529 aa).

The segment at 153-183 is disordered; sequence QILQQQQRWRRRRSPTARSVPAQKPWSREPA.

This sequence belongs to the PAT1 family. As to quaternary structure, interacts with LSM1.

The protein resides in the cytoplasm. The protein localises to the nucleus. In terms of biological role, RNA-binding protein that acts as a translational repressor. The chain is Protein PAT1 homolog 2 (Patl2) from Mus musculus (Mouse).